A 371-amino-acid chain; its full sequence is Aspartate-semialdehyde dehydrogenase (371 aa).

Residues 11 to 14 (RGMV), 38 to 39 (TS), and Q75 contribute to the NADP(+) site. R104 contacts phosphate. The Acyl-thioester intermediate role is filled by C137. Q164 contacts substrate. Residue 167 to 168 (SG) participates in NADP(+) binding. E243 provides a ligand contact to substrate. K246 contributes to the phosphate binding site. R269 contributes to the substrate binding site. Residue H276 is the Proton acceptor of the active site. Residue Q352 coordinates NADP(+).

The protein belongs to the aspartate-semialdehyde dehydrogenase family. As to quaternary structure, homodimer.

The catalysed reaction is L-aspartate 4-semialdehyde + phosphate + NADP(+) = 4-phospho-L-aspartate + NADPH + H(+). It functions in the pathway amino-acid biosynthesis; L-lysine biosynthesis via DAP pathway; (S)-tetrahydrodipicolinate from L-aspartate: step 2/4. It participates in amino-acid biosynthesis; L-methionine biosynthesis via de novo pathway; L-homoserine from L-aspartate: step 2/3. The protein operates within amino-acid biosynthesis; L-threonine biosynthesis; L-threonine from L-aspartate: step 2/5. Its function is as follows. Catalyzes the NADPH-dependent formation of L-aspartate-semialdehyde (L-ASA) by the reductive dephosphorylation of L-aspartyl-4-phosphate. The sequence is that of Aspartate-semialdehyde dehydrogenase from Buchnera aphidicola subsp. Schizaphis graminum (strain Sg).